Consider the following 121-residue polypeptide: MLKMQRSQQRVALMMLMVVAAVHCQESESRRAVTEHQLMHDRGRSIQSLKRLIWLSSAIEGLHTAQARTLEPDSRWRSRGAQLYSQPGREESSGGQKRALETLLSDLYRAHLTFGLGEPEK.

The N-terminal stretch at 1-24 (MLKMQRSQQRVALMMLMVVAAVHC) is a signal peptide. Residues 25–29 (QESES) constitute a propeptide that is removed on maturation. The interval 77 to 97 (RSRGAQLYSQPGREESSGGQK) is disordered.

This sequence belongs to the parathyroid hormone family. As to expression, specifically expressed in a bilateral cluster of neurons in the dorsal region of the periventricular hypothalamus. Their axons project through the midbrain and hindbrain and down the spinal cord.

It is found in the secreted. Its function is as follows. Neuroendocrine peptide which is produced by a subset of neurons in the hypothalamus. Activates the G-protein coupled receptors pth1ra, pth1rb and pth2r with similar affinity. Receptor binding stimulates intracellular cAMP production. Plays a role in bone mineralization by regulating expression of factors involved in phosphate homeostasis. Important for embryonic bone development. The chain is Parathyroid hormone 4 from Danio rerio (Zebrafish).